The sequence spans 155 residues: 6,7-dimethyl-8-ribityllumazine synthase (155 aa).

5-amino-6-(D-ribitylamino)uracil is bound by residues phenylalanine 23, 57–59 (AFE), and 81–83 (AVI). (2S)-2-hydroxy-3-oxobutyl phosphate is bound at residue 86–87 (ST). The active-site Proton donor is histidine 89. Phenylalanine 114 is a 5-amino-6-(D-ribitylamino)uracil binding site. Arginine 128 contributes to the (2S)-2-hydroxy-3-oxobutyl phosphate binding site.

It belongs to the DMRL synthase family.

It carries out the reaction (2S)-2-hydroxy-3-oxobutyl phosphate + 5-amino-6-(D-ribitylamino)uracil = 6,7-dimethyl-8-(1-D-ribityl)lumazine + phosphate + 2 H2O + H(+). Its pathway is cofactor biosynthesis; riboflavin biosynthesis; riboflavin from 2-hydroxy-3-oxobutyl phosphate and 5-amino-6-(D-ribitylamino)uracil: step 1/2. In terms of biological role, catalyzes the formation of 6,7-dimethyl-8-ribityllumazine by condensation of 5-amino-6-(D-ribitylamino)uracil with 3,4-dihydroxy-2-butanone 4-phosphate. This is the penultimate step in the biosynthesis of riboflavin. This Citrifermentans bemidjiense (strain ATCC BAA-1014 / DSM 16622 / JCM 12645 / Bem) (Geobacter bemidjiensis) protein is 6,7-dimethyl-8-ribityllumazine synthase.